Consider the following 155-residue polypeptide: Ribosome maturation factor RimP (155 aa).

It belongs to the RimP family.

The protein resides in the cytoplasm. Functionally, required for maturation of 30S ribosomal subunits. The sequence is that of Ribosome maturation factor RimP from Prochlorococcus marinus (strain MIT 9515).